The following is an 86-amino-acid chain: Putative pro-MCH-like protein 2 (86 aa).

The NGE-like stretch occupies residues 31–49 (GSVAFPAENGVQDTESTLE). The interval 40-60 (GVQDTESTLEKRETGDEENSA) is disordered. An NEI-like region spans residues 52–64 (ETGDEENSAKFPI). The segment at 68–86 (DFDTLRCMLGRVYQRCWQV) is melanin-concentrating hormone-like.

This sequence belongs to the melanin-concentrating hormone family. In terms of tissue distribution, expressed in testis but not in brain.

In Homo sapiens (Human), this protein is Putative pro-MCH-like protein 2 (PMCHL2).